A 404-amino-acid chain; its full sequence is Putative arginine deiminase (404 aa).

Residue Cys394 is the Amidino-cysteine intermediate of the active site.

It belongs to the arginine deiminase family.

The protein resides in the cytoplasm. It catalyses the reaction L-arginine + H2O = L-citrulline + NH4(+). Its pathway is amino-acid degradation; L-arginine degradation via ADI pathway; carbamoyl phosphate from L-arginine: step 1/2. The sequence is that of Putative arginine deiminase (arcA) from Mycoplasma pneumoniae (strain ATCC 29342 / M129 / Subtype 1) (Mycoplasmoides pneumoniae).